We begin with the raw amino-acid sequence, 85 residues long: Neurotoxin beta-KTx 14.3 (85 aa).

Residues 1–20 form the signal peptide; it reads MKQYIFFLALIVLTATFAEA. Residues 21–37 constitute a propeptide that is removed on maturation; it reads GKKTEILDKVKKVFSKG. The BetaSPN-type CS-alpha/beta domain maps to 49-85; the sequence is ELGCPFIEKWCEDHCESKKQVGKCENFDCSCVKLGGK. 3 disulfides stabilise this stretch: cysteine 52-cysteine 72, cysteine 59-cysteine 77, and cysteine 63-cysteine 79.

The protein belongs to the long chain scorpion toxin family. Class 2 subfamily. As to expression, expressed by the venom gland.

It is found in the secreted. In terms of biological role, toxin with activity on voltage-gated potassium channels. Moderately and reversibly blocks up to 50% of the activity of Kv7.1/KCNQ1 (tested at 22 uM). 3D-structure modeling of the KCNQ1-toxin complex shows that the toxin interacts with the channel pore domain. Additionally, shows a very weak effect to block voltage-gated potassium channel Kv1.1/KCNA1. Its function is as follows. Has a very weak effect to block voltage-gated potassium channel Kv1.1/KCNA1. The chain is Neurotoxin beta-KTx 14.3 from Lychas mucronatus (Chinese swimming scorpion).